Consider the following 800-residue polypeptide: Integrin beta-5 (800 aa).

The first 24 residues, 1 to 24, serve as a signal peptide directing secretion; the sequence is MPRAPALLFSCLLGLCALVPRLPG. The Extracellular portion of the chain corresponds to 25–722; sequence LNICTSGSAT…PECGTAPSAM (698 aa). The 50-residue stretch at 27-76 folds into the PSI domain; it reads ICTSGSATSCEECLLIHPKCAWCFKEDFGSLRSVTSRCDLKANLIRNGCG. 19 disulfide bridges follow: cysteine 28–cysteine 46, cysteine 36–cysteine 463, cysteine 39–cysteine 64, cysteine 49–cysteine 75, cysteine 202–cysteine 211, cysteine 259–cysteine 300, cysteine 401–cysteine 413, cysteine 433–cysteine 461, cysteine 465–cysteine 484, cysteine 476–cysteine 487, cysteine 489–cysteine 498, cysteine 500–cysteine 530, cysteine 513–cysteine 528, cysteine 522–cysteine 533, cysteine 535–cysteine 548, cysteine 550–cysteine 571, cysteine 555–cysteine 569, cysteine 563–cysteine 574, and cysteine 576–cysteine 585. The VWFA domain maps to 136–378; the sequence is YPVDLYYLMD…QLIINAYNSI (243 aa). Mg(2+) contacts are provided by serine 147 and serine 149. Ca(2+)-binding residues include serine 149, aspartate 152, aspartate 153, and aspartate 184. Residues asparagine 242, aspartate 244, proline 246, and glutamate 247 each coordinate Ca(2+). Glutamate 247 contacts Mg(2+). N-linked (GlcNAc...) asparagine glycosylation occurs at asparagine 347. Glycine 362 is a binding site for Ca(2+). 4 I-EGF domains span residues 465-499, 500-549, 550-586, and 587-626; these read CSAGLEPDSARCSSNGTYVCGLCECNPGYLGTRCE, CQEG…SFCE, CDNFSCARNKGVLCSGHGECHCGECKCHAGYIGDNCN, and CSTDISTCQARDGHICSDRGHCVCGQCQCTEPGAFGETCE. An N-linked (GlcNAc...) asparagine glycan is attached at asparagine 479. N-linked (GlcNAc...) asparagine glycosylation occurs at asparagine 552. N-linked (GlcNAc...) asparagine glycosylation is present at asparagine 586. Disulfide bonds link cysteine 587–cysteine 610, cysteine 594–cysteine 608, cysteine 602–cysteine 613, cysteine 615–cysteine 625, cysteine 628–cysteine 631, cysteine 635–cysteine 683, cysteine 641–cysteine 662, cysteine 644–cysteine 658, and cysteine 691–cysteine 715. N-linked (GlcNAc...) asparagine glycans are attached at residues asparagine 655 and asparagine 706. The helical transmembrane segment at 723-743 threads the bilayer; that stretch reads TILLAVVGSILLTGFALLVIW. Residues 744–800 lie on the Cytoplasmic side of the membrane; the sequence is KLLVTIHDRREFAKFQSERSRARYEMASNPLYRKPISTHTVDFTFNKFNKSYNGTVD. Serine 771 is subject to Phosphoserine.

Belongs to the integrin beta chain family. As to quaternary structure, heterodimer of an alpha and a beta subunit. Beta-5 (ITGB5) associates with alpha-V (ITGAV). Interacts with MYO10. Interacts with DAB2. Integrin ITGAV:ITGB5 interacts with FBLN5 (via N-terminus). ITGAV:ITGB5 interacts with CCN3. Interacts with tensin TNS3; TNS3 also interacts with PEAK1, thus acting as an adapter molecule to bridge the association of PEAK1 with ITGB5.

It is found in the cell membrane. In terms of biological role, integrin alpha-V/beta-5 (ITGAV:ITGB5) is a receptor for fibronectin. It recognizes the sequence R-G-D in its ligand. This chain is Integrin beta-5 (ITGB5), found in Bos taurus (Bovine).